A 377-amino-acid chain; its full sequence is N-acetyldiaminopimelate deacetylase (377 aa).

Residue aspartate 70 is part of the active site. The active-site Proton acceptor is glutamate 129.

Belongs to the peptidase M20A family. N-acetyldiaminopimelate deacetylase subfamily.

The enzyme catalyses N-acetyl-(2S,6S)-2,6-diaminopimelate + H2O = (2S,6S)-2,6-diaminopimelate + acetate. Its pathway is amino-acid biosynthesis; L-lysine biosynthesis via DAP pathway; LL-2,6-diaminopimelate from (S)-tetrahydrodipicolinate (acetylase route): step 3/3. In terms of biological role, catalyzes the conversion of N-acetyl-diaminopimelate to diaminopimelate and acetate. The sequence is that of N-acetyldiaminopimelate deacetylase from Streptococcus thermophilus (strain CNRZ 1066).